The sequence spans 31 residues: Cliotide T14 (31 aa).

The cyclopeptide (Asp-Asn) cross-link spans 1-31 (DTIPCGESCVWIPCISSILGCSCKDKVCYHN). Intrachain disulfides connect Cys-5-Cys-21, Cys-9-Cys-23, and Cys-14-Cys-28.

Post-translationally, contains 3 disulfide bonds. In terms of processing, this is a cyclic peptide. As to expression, expressed in seed but not in root nodules.

Functionally, probably participates in a plant defense mechanism. Not active against Gram-negative bacterium E.coli ATCC 700926 or Gram-positive bacterium S.aureus ATCC 12600 up to a concentration of 100 uM under low-salt conditions. The protein is Cliotide T14 of Clitoria ternatea (Butterfly pea).